We begin with the raw amino-acid sequence, 405 residues long: Arginine biosynthesis bifunctional protein ArgJ (405 aa).

6 residues coordinate substrate: T152, K178, T189, E276, N400, and T405. T189 (nucleophile) is an active-site residue.

This sequence belongs to the ArgJ family. In terms of assembly, heterotetramer of two alpha and two beta chains.

The protein localises to the cytoplasm. It catalyses the reaction N(2)-acetyl-L-ornithine + L-glutamate = N-acetyl-L-glutamate + L-ornithine. It carries out the reaction L-glutamate + acetyl-CoA = N-acetyl-L-glutamate + CoA + H(+). It participates in amino-acid biosynthesis; L-arginine biosynthesis; L-ornithine and N-acetyl-L-glutamate from L-glutamate and N(2)-acetyl-L-ornithine (cyclic): step 1/1. Its pathway is amino-acid biosynthesis; L-arginine biosynthesis; N(2)-acetyl-L-ornithine from L-glutamate: step 1/4. Its function is as follows. Catalyzes two activities which are involved in the cyclic version of arginine biosynthesis: the synthesis of N-acetylglutamate from glutamate and acetyl-CoA as the acetyl donor, and of ornithine by transacetylation between N(2)-acetylornithine and glutamate. The polypeptide is Arginine biosynthesis bifunctional protein ArgJ (Pseudomonas syringae pv. syringae (strain B728a)).